The chain runs to 114 residues: MVSKGKTVKDPGIPNITIPEKVCEDEDCPYHGSLRVRGITLEGVIVKYRGTKAAVIERQYLYYDSKYKRYERRRSRIHAHVPPCINVREGDKVIIGECRPLSKSISFVVLGKVS.

The protein belongs to the universal ribosomal protein uS17 family. As to quaternary structure, part of the 30S ribosomal subunit.

Its function is as follows. One of the primary rRNA binding proteins, it binds specifically to the 5'-end of 16S ribosomal RNA. The sequence is that of Small ribosomal subunit protein uS17 from Saccharolobus solfataricus (strain ATCC 35092 / DSM 1617 / JCM 11322 / P2) (Sulfolobus solfataricus).